Reading from the N-terminus, the 324-residue chain is Viral cathepsin (324 aa).

The N-terminal stretch at 1–16 (MNKIMLCLLVCGVVHA) is a signal peptide. The propeptide at 17–113 (ATYDLLKAPN…VILDRPPDRG (97 aa)) is activation peptide. Cystine bridges form between C134–C175, C168–C208, and C263–C311. Residue C137 is part of the active site. An N-linked (GlcNAc...) asparagine; by host glycan is attached at N159. Residues H270 and N290 contribute to the active site.

The protein belongs to the peptidase C1 family. In terms of processing, synthesized as an inactive proenzyme and activated by proteolytic removal of the inhibitory propeptide.

The enzyme catalyses Endopeptidase of broad specificity, hydrolyzing substrates of both cathepsin L and cathepsin B.. Cysteine protease that plays an essential role in host liquefaction to facilitate horizontal transmission of the virus. May participate in the degradation of foreign protein expressed by the baculovirus system. This Orgyia pseudotsugata (Douglas-fir tussock moth) protein is Viral cathepsin (VCATH).